Here is a 1519-residue protein sequence, read N- to C-terminus: Dicer-like protein 1 (1519 aa).

The span at 1–13 (MTHQNTETASLAT) shows a compositional bias: polar residues. Residues 1–62 (MTHQNTETAS…KDPSQRQRQQ (62 aa)) form a disordered region. Positions 39–48 (SDESEGSEEE) are enriched in acidic residues. A Helicase ATP-binding domain is found at 116-297 (LFERAKVQNT…EAARNLEALL (182 aa)). ATP is bound at residue 129-136 (LDTGSGKT). A DEAH box motif is present at residues 242–245 (DEAH). The Helicase C-terminal domain maps to 431–601 (ALSSKVRVLW…QLLPEDRILH (171 aa)). Residues 634 to 724 (AITVLARYAS…NSVYHRRLPA (91 aa)) form the Dicer dsRNA-binding fold domain. The 120-residue stretch at 882–1001 (DDIEYQADMP…ICIEPLKISA (120 aa)) folds into the PAZ domain. RNase III domains are found at residues 1026 to 1184 (GLEA…LTPG) and 1235 to 1387 (CRRV…VDSN). Glutamate 1275, aspartate 1373, and glutamate 1376 together coordinate Mg(2+). Residues 1421-1489 (TFLHNKLTNE…SENALTELLH (69 aa)) enclose the DRBM domain. Positions 1433, 1460, 1501, and 1503 each coordinate Zn(2+).

This sequence belongs to the helicase family. Dicer subfamily. Requires Mg(2+) as cofactor. The cofactor is Mn(2+).

Dicer-like endonuclease involved in cleaving double-stranded RNA in the RNA interference (RNAi) pathway. Produces 21 to 25 bp dsRNAs (siRNAs) which target the selective destruction of homologous RNAs leading to sequence-specific suppression of gene expression, called post-transcriptional gene silencing (PTGS). Part of a broad host defense response against viral infection and transposons. The chain is Dicer-like protein 1 (dcl1) from Aspergillus terreus (strain NIH 2624 / FGSC A1156).